Consider the following 157-residue polypeptide: Small ribosomal subunit protein uS7 (157 aa).

The protein belongs to the universal ribosomal protein uS7 family. In terms of assembly, part of the 30S ribosomal subunit. Contacts proteins S9 and S11.

One of the primary rRNA binding proteins, it binds directly to 16S rRNA where it nucleates assembly of the head domain of the 30S subunit. Is located at the subunit interface close to the decoding center, probably blocks exit of the E-site tRNA. The protein is Small ribosomal subunit protein uS7 of Koribacter versatilis (strain Ellin345).